The primary structure comprises 603 residues: Elongation factor 4 (603 aa).

Residues 7 to 189 enclose the tr-type G domain; the sequence is SRIRNFCIIA…SIVHLVPPPS (183 aa). GTP is bound by residues 19–24 and 136–139; these read DHGKST and NKID.

It belongs to the TRAFAC class translation factor GTPase superfamily. Classic translation factor GTPase family. LepA subfamily.

It is found in the cell inner membrane. It carries out the reaction GTP + H2O = GDP + phosphate + H(+). Required for accurate and efficient protein synthesis under certain stress conditions. May act as a fidelity factor of the translation reaction, by catalyzing a one-codon backward translocation of tRNAs on improperly translocated ribosomes. Back-translocation proceeds from a post-translocation (POST) complex to a pre-translocation (PRE) complex, thus giving elongation factor G a second chance to translocate the tRNAs correctly. Binds to ribosomes in a GTP-dependent manner. The polypeptide is Elongation factor 4 (Crocosphaera subtropica (strain ATCC 51142 / BH68) (Cyanothece sp. (strain ATCC 51142))).